A 519-amino-acid chain; its full sequence is ATP synthase subunit beta, mitochondrial (519 aa).

An ATP-binding site is contributed by 195-202 (GGAGVGKT).

Belongs to the ATPase alpha/beta chains family. In terms of assembly, F-type ATPases have 2 components, CF(1) - the catalytic core - and CF(0) - the membrane proton channel. CF(1) has five subunits: alpha(3), beta(3), gamma(1), delta(1), epsilon(1). CF(0) has three main subunits: a, b and c.

It localises to the mitochondrion. The protein localises to the mitochondrion inner membrane. The catalysed reaction is ATP + H2O + 4 H(+)(in) = ADP + phosphate + 5 H(+)(out). Its function is as follows. Mitochondrial membrane ATP synthase (F(1)F(0) ATP synthase or Complex V) produces ATP from ADP in the presence of a proton gradient across the membrane which is generated by electron transport complexes of the respiratory chain. F-type ATPases consist of two structural domains, F(1) - containing the extramembraneous catalytic core, and F(0) - containing the membrane proton channel, linked together by a central stalk and a peripheral stalk. During catalysis, ATP synthesis in the catalytic domain of F(1) is coupled via a rotary mechanism of the central stalk subunits to proton translocation. Subunits alpha and beta form the catalytic core in F(1). Rotation of the central stalk against the surrounding alpha(3)beta(3) subunits leads to hydrolysis of ATP in three separate catalytic sites on the beta subunits. This is ATP synthase subunit beta, mitochondrial (atp-2) from Neurospora crassa (strain ATCC 24698 / 74-OR23-1A / CBS 708.71 / DSM 1257 / FGSC 987).